The sequence spans 1197 residues: MQLYSAIFRGHIRPNAVVGAASMFIQHNSIQLHRSPKLLLRPSSVVRSLHCRRSGGLVTHSQRSRVLCVKAARGDASSSTLGIEWRAANLPYFQRQNSGYGRIAYNDYESSDESDRDVGSSQSQQMAGSTLDNIDQWRFKLTMLLRNKEDQEVVSRERKDRRDFDHISALATRMGLHSRQYSKIVVISKAPLPNYRPDLDDKRPQREVVLPFGLQSEVDAHLHSFLDQKKTLIPEMPRQNSSESLANGYGNYETPETVMQNSLARERILRPRSLQLKSKQQQWVDSPEGQKMVGFRKTLPAYKEKDALLKAIAANQVVVVSGETGCGKTTQLPQYILESEIEAARGATCSIICTQPRRISAISVSERVAAERGEQIGESVGYKVRLEGMRGRDTRLLFCTTGVLLRRLLVDRSLKGVTHVVVDEIHERGMNEDFLLIVLKDLLPRRPDLKLILMSATLNAELFSSYFGGAPAMHIPGFTYPVRAHFLEDYLETSGYRLTTYNQIDDYGEEKTWKMQKQAQFKKRKSLISSAVEDALEAADFKGYNFRTRDSLSCWSPDSIGFNLIENVLCHIVKGERPGAVLVFMTGWDDINSLKNQLEAHSLLGDPNKVLLLACHGSMASSEQRLIFDRPPEGIRKIVLATNMAETSITINDVVYVIDCGKAKETSYDALNNTPCLLPSWISKAAARQRRGRAGRVMPGECYHLYPRCVYEAFADYQQPELLRTPLQSLCLQIKSLGLGSISEFLSRALQPPEALSVQNAVEYLKIIGALDDDENLTPLGKNLSMLPVEPKLGKMLILGAIFNCLDPVMTVVAGLSVRDPFLMPFDKKDLAETARSKFSGRDYSDHLTLVRAYNGWKDAERTHSGYDYCWKNFLSSQTLKAMDSMRKQFFNLLKEASLIDNIEGCSKLSHDEHLVRAIICAGMFPGVCSVVNKEKSITLKTMEDGQVLLYSSSVNGNVPMIPFPWLVFNDKVKVNSVFLRDSTAVSDSVLLLFGDKISSGGFDGHLKMLGGYLEFFMKPTLAYTYLSLKRELDELIQNKLVNPKLDIQLYDKLMTAIRLLVSEDQCEGRFVYGRKALSPTPAKKLKDVGAQLQNSGGENNKNQLQTLLARAGHGSPVYKTRQLKNNQFRSMVTFNGLDFMGKPCGSKKNAEKDAAHEALLWLQGESKSSLNDLNHMSMLLKKNKSKNHAKASTKWG.

One can recognise a Helicase ATP-binding domain in the interval 309–476 (LKAIAANQVV…FGGAPAMHIP (168 aa)). An ATP-binding site is contributed by 322 to 329 (GETGCGKT). A DEIH box motif is present at residues 423 to 426 (DEIH). Residues 564–738 (LIENVLCHIV…SLCLQIKSLG (175 aa)) form the Helicase C-terminal domain.

Belongs to the DExH box helicase family.

The enzyme catalyses ATP + H2O = ADP + phosphate + H(+). This is DExH-box ATP-dependent RNA helicase DExH3 from Arabidopsis thaliana (Mouse-ear cress).